A 148-amino-acid chain; its full sequence is Protein NrdI (148 aa).

The protein belongs to the NrdI family.

Probably involved in ribonucleotide reductase function. This is Protein NrdI from Mycolicibacterium gilvum (strain PYR-GCK) (Mycobacterium gilvum (strain PYR-GCK)).